The following is a 258-amino-acid chain: Heat-labile enterotoxin A chain (258 aa).

A signal peptide spans 1-18 (MKNITFIFFILLASPLYA). 25-39 (RADSRPPDEIKRSGG) lines the NAD(+) pocket. The active site involves Glu-130. Cysteines 205 and 217 form a disulfide.

This sequence belongs to the enterotoxin A family. As to quaternary structure, heterohexamer of one A chain and of five B chains.

In terms of biological role, the biological activity of the toxin is produced by the A chain, which activates intracellular adenyl cyclase. The polypeptide is Heat-labile enterotoxin A chain (eltA) (Escherichia coli).